The following is a 430-amino-acid chain: tRNA(Ile)-lysidine synthase (430 aa).

Position 24–29 (24–29) interacts with ATP; the sequence is SGGLDS.

It belongs to the tRNA(Ile)-lysidine synthase family.

The protein resides in the cytoplasm. It carries out the reaction cytidine(34) in tRNA(Ile2) + L-lysine + ATP = lysidine(34) in tRNA(Ile2) + AMP + diphosphate + H(+). Ligates lysine onto the cytidine present at position 34 of the AUA codon-specific tRNA(Ile) that contains the anticodon CAU, in an ATP-dependent manner. Cytidine is converted to lysidine, thus changing the amino acid specificity of the tRNA from methionine to isoleucine. This chain is tRNA(Ile)-lysidine synthase, found in Haemophilus influenzae (strain 86-028NP).